A 137-amino-acid polypeptide reads, in one-letter code: UPF0768 protein C1952.04c (137 aa).

Residues 79-93 are compositionally biased toward basic and acidic residues; that stretch reads QRRRREDLPTPERPE. The tract at residues 79–137 is disordered; that stretch reads QRRRREDLPTPERPEASAQQHAFFPGSSSQQTDIPNVRPQPHIPPPRKSDEAPPPYSYK. The span at 119 to 137 shows a compositional bias: pro residues; sequence PHIPPPRKSDEAPPPYSYK.

The protein belongs to the UPF0768 family.

This chain is UPF0768 protein C1952.04c, found in Schizosaccharomyces pombe (strain 972 / ATCC 24843) (Fission yeast).